Consider the following 301-residue polypeptide: ATP synthase gamma chain (301 aa).

This sequence belongs to the ATPase gamma chain family. As to quaternary structure, F-type ATPases have 2 components, CF(1) - the catalytic core - and CF(0) - the membrane proton channel. CF(1) has five subunits: alpha(3), beta(3), gamma(1), delta(1), epsilon(1). CF(0) has three main subunits: a, b and c.

It localises to the cell inner membrane. In terms of biological role, produces ATP from ADP in the presence of a proton gradient across the membrane. The gamma chain is believed to be important in regulating ATPase activity and the flow of protons through the CF(0) complex. This chain is ATP synthase gamma chain, found in Bordetella bronchiseptica (strain ATCC BAA-588 / NCTC 13252 / RB50) (Alcaligenes bronchisepticus).